The chain runs to 456 residues: Proline--tRNA ligase (456 aa).

This sequence belongs to the class-II aminoacyl-tRNA synthetase family. ProS type 3 subfamily. In terms of assembly, homodimer.

It is found in the cytoplasm. The catalysed reaction is tRNA(Pro) + L-proline + ATP = L-prolyl-tRNA(Pro) + AMP + diphosphate. Its function is as follows. Catalyzes the attachment of proline to tRNA(Pro) in a two-step reaction: proline is first activated by ATP to form Pro-AMP and then transferred to the acceptor end of tRNA(Pro). This Methanococcus aeolicus (strain ATCC BAA-1280 / DSM 17508 / OCM 812 / Nankai-3) protein is Proline--tRNA ligase.